The following is a 671-amino-acid chain: tRNA 5-methylaminomethyl-2-thiouridine biosynthesis bifunctional protein MnmC (671 aa).

The segment at 1–245 (MVNVMNTLSF…KREMLWGEKP (245 aa)) is tRNA (mnm(5)s(2)U34)-methyltransferase. Positions 272–671 (VGGGVASLFV…RKLLKGSKVE (400 aa)) are FAD-dependent cmnm(5)s(2)U34 oxidoreductase.

It in the N-terminal section; belongs to the methyltransferase superfamily. tRNA (mnm(5)s(2)U34)-methyltransferase family. The protein in the C-terminal section; belongs to the DAO family. It depends on FAD as a cofactor.

It localises to the cytoplasm. It carries out the reaction 5-aminomethyl-2-thiouridine(34) in tRNA + S-adenosyl-L-methionine = 5-methylaminomethyl-2-thiouridine(34) in tRNA + S-adenosyl-L-homocysteine + H(+). In terms of biological role, catalyzes the last two steps in the biosynthesis of 5-methylaminomethyl-2-thiouridine (mnm(5)s(2)U) at the wobble position (U34) in tRNA. Catalyzes the FAD-dependent demodification of cmnm(5)s(2)U34 to nm(5)s(2)U34, followed by the transfer of a methyl group from S-adenosyl-L-methionine to nm(5)s(2)U34, to form mnm(5)s(2)U34. In Actinobacillus pleuropneumoniae serotype 5b (strain L20), this protein is tRNA 5-methylaminomethyl-2-thiouridine biosynthesis bifunctional protein MnmC.